A 147-amino-acid chain; its full sequence is uncharacterized protein (147 aa).

2 consecutive transmembrane segments (helical) span residues 41–61 (LANFLACLGLLAISSSSALLI) and 67–87 (LLAASATAPSAMTAIFTSFPL).

It is found in the cell membrane. This is an uncharacterized protein from Pyrococcus horikoshii (strain ATCC 700860 / DSM 12428 / JCM 9974 / NBRC 100139 / OT-3).